The primary structure comprises 369 residues: DNA polymerase processivity factor (369 aa).

The interval Ile345–Gln369 is disordered.

It belongs to the herpesviridae DNA polymerase processivity factor family. Interacts with the DNA polymerase catalytic subunit. Interacts with the origin-binding protein.

The protein resides in the host nucleus. Its function is as follows. Plays an essential role in viral DNA replication by acting as the polymerase accessory subunit. Associates with the viral polymerase to increase its processivity and forms high-affinity direct interactions with DNA. Facilitates the origin-binding protein UL9 loading onto DNA thus increasing its ability to assemble into a functional complex capable of unwinding duplex DNA. The polypeptide is DNA polymerase processivity factor (MDV055) (Gallus gallus (Chicken)).